Here is a 198-residue protein sequence, read N- to C-terminus: Recombination protein RecR (198 aa).

A C4-type zinc finger spans residues 58–73 (CSVCGNFTDTDPCAIC). The region spanning 81-175 (DIICVVEQPK…KVTRIAAGIP (95 aa)) is the Toprim domain.

It belongs to the RecR family.

Functionally, may play a role in DNA repair. It seems to be involved in an RecBC-independent recombinational process of DNA repair. It may act with RecF and RecO. The protein is Recombination protein RecR of Clostridium perfringens (strain ATCC 13124 / DSM 756 / JCM 1290 / NCIMB 6125 / NCTC 8237 / Type A).